Consider the following 465-residue polypeptide: Cysteine--tRNA ligase (465 aa).

Cys-27 is a binding site for Zn(2+). The 'HIGH' region signature appears at 29 to 39; the sequence is PTVYNFFHIGN. Cys-207, His-232, and Glu-236 together coordinate Zn(2+). The 'KMSKS' region signature appears at 264 to 268; the sequence is KMSKS. ATP is bound at residue Lys-267.

Belongs to the class-I aminoacyl-tRNA synthetase family. Monomer. Zn(2+) serves as cofactor.

It is found in the cytoplasm. It catalyses the reaction tRNA(Cys) + L-cysteine + ATP = L-cysteinyl-tRNA(Cys) + AMP + diphosphate. The protein is Cysteine--tRNA ligase of Clostridium botulinum (strain Loch Maree / Type A3).